A 402-amino-acid polypeptide reads, in one-letter code: Putative cystathionine beta-lyase (402 aa).

At Lys236 the chain carries N6-(pyridoxal phosphate)lysine.

Belongs to the class-II pyridoxal-phosphate-dependent aminotransferase family. MalY/PatB cystathionine beta-lyase subfamily. Pyridoxal 5'-phosphate serves as cofactor.

It carries out the reaction L,L-cystathionine + H2O = L-homocysteine + pyruvate + NH4(+). The enzyme catalyses an S-substituted L-cysteine + H2O = a thiol + pyruvate + NH4(+). Its pathway is amino-acid biosynthesis; L-methionine biosynthesis via de novo pathway; L-homocysteine from L-cystathionine: step 1/1. This is Putative cystathionine beta-lyase from Mycobacterium leprae (strain TN).